A 257-amino-acid polypeptide reads, in one-letter code: MPAPTNTFKSALASGDLLLGCWAGFADPYATEVLATAGYDWLVIDGEHAPNDLRSISAQLAVLRGQHSHPVVRLPMGEPWLIKQVLDAGAQTLLIPMVESAEEARDLVRAMRYPPDGIRGSGAALARASHFADIPDYIATANDQMCLLVQVETRAGIDALDEILAVDGVDGVFIGPSDLAADMGHMGDASQADVAETIEDALARIRTAGRAAGILALDDATIRRYRDWGANFLAVGIDVVMLAQTARQTLAKWRTDD.

H48 (proton acceptor) is an active-site residue. A divalent metal cation contacts are provided by E152 and D178.

Belongs to the HpcH/HpaI aldolase family. It depends on a divalent metal cation as a cofactor.

The catalysed reaction is D-glyceraldehyde + 3-hydroxypyruvate = 2-dehydro-D-gluconate. It catalyses the reaction D-glyceraldehyde + pyruvate = 2-dehydro-3-deoxy-L-galactonate. It carries out the reaction 2-dehydro-3-deoxy-D-gluconate = D-glyceraldehyde + pyruvate. In terms of biological role, aldolase which can catalyze in vitro the aldolisation reaction between hydroxypyruvate (HPA) or pyruvate (PA) and D-glyceraldehyde (D-GA). The condensation of hydroxypyruvate and D-glyceraldehyde produces 2-dehydro-D-gluconate as the major product. The condensation of pyruvate and D-glyceraldehyde produces 2-dehydro-3-deoxy-L-galactonate as the major product and 2-dehydro-3-deoxy-D-gluconate. In Roseovarius nubinhibens (strain ATCC BAA-591 / DSM 15170 / ISM), this protein is Hydroxypyruvate/pyruvate aldolase.